The primary structure comprises 366 residues: tRNA/tmRNA (uracil-C(5))-methyltransferase (366 aa).

Positions 190, 218, 223, 239, and 299 each coordinate S-adenosyl-L-methionine. The active-site Nucleophile is cysteine 324. Glutamate 358 serves as the catalytic Proton acceptor.

Belongs to the class I-like SAM-binding methyltransferase superfamily. RNA M5U methyltransferase family. TrmA subfamily.

It catalyses the reaction uridine(54) in tRNA + S-adenosyl-L-methionine = 5-methyluridine(54) in tRNA + S-adenosyl-L-homocysteine + H(+). It carries out the reaction uridine(341) in tmRNA + S-adenosyl-L-methionine = 5-methyluridine(341) in tmRNA + S-adenosyl-L-homocysteine + H(+). Dual-specificity methyltransferase that catalyzes the formation of 5-methyluridine at position 54 (m5U54) in all tRNAs, and that of position 341 (m5U341) in tmRNA (transfer-mRNA). This chain is tRNA/tmRNA (uracil-C(5))-methyltransferase, found in Shigella boydii serotype 18 (strain CDC 3083-94 / BS512).